A 345-amino-acid chain; its full sequence is Calcium/calmodulin-dependent protein kinase type 1 (345 aa).

The tract at residues 1–23 (MPLFGSKKETAKKSSKKDKDEGK) is disordered. Positions 31-287 (YILKDLLGTG…CKQALGHPWI (257 aa)) constitute a Protein kinase domain. ATP-binding positions include 37–45 (LGTGAFSQV) and Lys-61. Residue Asp-153 is the Proton acceptor of the active site. The autoinhibitory domain stretch occupies residues 287 to 327 (ISGNAASTENIHSSVSEQLKKNFAKSRWRQAYHATAVIRQM). The calmodulin-binding stretch occupies residues 307-328 (KNFAKSRWRQAYHATAVIRQMR).

It belongs to the protein kinase superfamily. CAMK Ser/Thr protein kinase family. CaMK subfamily. In terms of tissue distribution, highly expressed in hepatopancreas and to a lesser extent in gills. Low expression in hemocytes, testis, ovary, heart, eyestalk, muscle and epidermis.

The catalysed reaction is L-seryl-[protein] + ATP = O-phospho-L-seryl-[protein] + ADP + H(+). The enzyme catalyses L-threonyl-[protein] + ATP = O-phospho-L-threonyl-[protein] + ADP + H(+). With respect to regulation, activated by Ca(2+)/calmodulin. Binding of calmodulin results in conformational change that relieves intrasteric autoinhibition. Its function is as follows. Calcium/calmodulin-dependent protein kinase that operates in the calcium-triggered CaMKK-CaMK1 signaling cascade and, upon calcium influx, regulates transcription activators activity, cell cycle, hormone production, cell differentiation, actin filament organization and neurite outgrowth. Involved in molting. The protein is Calcium/calmodulin-dependent protein kinase type 1 of Macrobrachium nipponense (Oriental river shrimp).